The following is a 365-amino-acid chain: UDP-N-acetylglucosamine--N-acetylmuramyl-(pentapeptide) pyrophosphoryl-undecaprenol N-acetylglucosamine transferase (365 aa).

UDP-N-acetyl-alpha-D-glucosamine contacts are provided by residues 13 to 15, N125, R165, S192, and Q293; that span reads TGG.

This sequence belongs to the glycosyltransferase 28 family. MurG subfamily.

It localises to the cell inner membrane. The enzyme catalyses di-trans,octa-cis-undecaprenyl diphospho-N-acetyl-alpha-D-muramoyl-L-alanyl-D-glutamyl-meso-2,6-diaminopimeloyl-D-alanyl-D-alanine + UDP-N-acetyl-alpha-D-glucosamine = di-trans,octa-cis-undecaprenyl diphospho-[N-acetyl-alpha-D-glucosaminyl-(1-&gt;4)]-N-acetyl-alpha-D-muramoyl-L-alanyl-D-glutamyl-meso-2,6-diaminopimeloyl-D-alanyl-D-alanine + UDP + H(+). It participates in cell wall biogenesis; peptidoglycan biosynthesis. Functionally, cell wall formation. Catalyzes the transfer of a GlcNAc subunit on undecaprenyl-pyrophosphoryl-MurNAc-pentapeptide (lipid intermediate I) to form undecaprenyl-pyrophosphoryl-MurNAc-(pentapeptide)GlcNAc (lipid intermediate II). This is UDP-N-acetylglucosamine--N-acetylmuramyl-(pentapeptide) pyrophosphoryl-undecaprenol N-acetylglucosamine transferase from Ruegeria pomeroyi (strain ATCC 700808 / DSM 15171 / DSS-3) (Silicibacter pomeroyi).